A 422-amino-acid chain; its full sequence is tRNA hydroxylation protein P (422 aa).

An N-terminal signal peptide occupies residues 1 to 58; the sequence is MNQVELLSPAGNLKKLKIALNYGADAVYGGVSHFSLRNRAGKEFTLETFKEGIDYAHA.

It belongs to the peptidase U32 family.

In terms of biological role, involved in prephenate-dependent formation of 5-hydroxyuridine (ho5U) modification at position 34 in tRNAs, the first step in 5-carboxymethoxyuridine (cmo5U) biosynthesis. The polypeptide is tRNA hydroxylation protein P (Helicobacter pylori (strain J99 / ATCC 700824) (Campylobacter pylori J99)).